The chain runs to 317 residues: Probable transcription factor At5g61620 (317 aa).

The segment at 12–25 (CSHCGHNGHNARTC) adopts a CCHC-type zinc-finger fold. The tract at residues 77–111 (DPIAAVDDTGYHSDGQIHSKKGKTAHEKKKGKPWT) is disordered. The span at 94 to 108 (HSKKGKTAHEKKKGK) shows a compositional bias: basic residues. The 57-residue stretch at 102-158 (HEKKKGKPWTEEEHRNFLIGLNKLGKGDWRGIAKSFVSTRTPTQVASHAQKYFIRLN) folds into the HTH myb-type domain. Positions 130–154 (WRGIAKSFVSTRTPTQVASHAQKYF) form a DNA-binding region, H-T-H motif. The interval 173–206 (SLEDQKEKERNSQDASTKTPPKQPITGIQQPVVQ) is disordered. Basic and acidic residues predominate over residues 175-184 (EDQKEKERNS). The span at 185–206 (QDASTKTPPKQPITGIQQPVVQ) shows a compositional bias: polar residues.

Its subcellular location is the nucleus. Probable transcription factor involved in somatic embryogenesis. Acts as a positive regulator of BHLH109. The chain is Probable transcription factor At5g61620 from Arabidopsis thaliana (Mouse-ear cress).